Reading from the N-terminus, the 997-residue chain is Translation initiation factor IF-2 (997 aa).

The tract at residues 101–409 is disordered; it reads ELAAEQAAAR…QHQDRRHEQV (309 aa). Low complexity-rich tracts occupy residues 116–185, 195–208, and 244–280; these read AEAV…QAEP, AAPA…VEPA, and PSAP…PAAP. Residues 281–292 show a composition bias toward basic and acidic residues; that stretch reads DRAREEARRAAE. The span at 385–394 shows a compositional bias: gly residues; that stretch reads RAGGKGGRGG. The span at 400–409 shows a compositional bias: basic and acidic residues; that stretch reads QHQDRRHEQV. The 168-residue stretch at 498 to 665 folds into the tr-type G domain; the sequence is PRAPVVTVMG…NVLLQAEILE (168 aa). Residues 507-514 form a G1 region; the sequence is GHVDHGKT. 507 to 514 provides a ligand contact to GTP; it reads GHVDHGKT. The interval 532–536 is G2; it reads GITQH. Residues 553 to 556 form a G3 region; the sequence is DTPG. Residues 553–557 and 607–610 contribute to the GTP site; these read DTPGH and NKID. A G4 region spans residues 607 to 610; the sequence is NKID. The segment at 643 to 645 is G5; that stretch reads SAK.

The protein belongs to the TRAFAC class translation factor GTPase superfamily. Classic translation factor GTPase family. IF-2 subfamily.

Its subcellular location is the cytoplasm. Its function is as follows. One of the essential components for the initiation of protein synthesis. Protects formylmethionyl-tRNA from spontaneous hydrolysis and promotes its binding to the 30S ribosomal subunits. Also involved in the hydrolysis of GTP during the formation of the 70S ribosomal complex. This chain is Translation initiation factor IF-2, found in Bordetella bronchiseptica (strain ATCC BAA-588 / NCTC 13252 / RB50) (Alcaligenes bronchisepticus).